Reading from the N-terminus, the 204-residue chain is uncharacterized protein (204 aa).

The first 21 residues, 1-21 (MIKKFLLFAMLNIFLTNKAHS), serve as a signal peptide directing secretion.

This is an uncharacterized protein from Borreliella burgdorferi (strain ATCC 35210 / DSM 4680 / CIP 102532 / B31) (Borrelia burgdorferi).